The chain runs to 503 residues: Glucosaminyl-phosphatidylinositol-acyltransferase PIGW (503 aa).

Residues 1 to 21 (MSQKQLKEAFVRNLSGTSVLE) are Lumenal-facing. N13 carries N-linked (GlcNAc...) asparagine glycosylation. The chain crosses the membrane as a helical span at residues 22–42 (VTQGLCFPAFCILCRGLWIIF). Residues 43 to 48 (SQHVCS) are Cytoplasmic-facing. Residues 49-71 (FSNTWSTRFLMDFVVLIVPLVIT) traverse the membrane as a helical segment. The Lumenal segment spans residues 72 to 74 (LTV). Residues 75–97 (LSSFILLENLTVIVWGAWLLYQI) form a helical membrane-spanning segment. Residues 98–131 (YHRRTCYAKVPVQKVFANFLKISLESEYNPAITC) lie on the Cytoplasmic side of the membrane. Residues 132-152 (YRVINSVFTAIAILAVDFPLF) form a helical membrane-spanning segment. Residues 153–160 (PRRFAKTE) lie on the Lumenal side of the membrane. Residues 161 to 181 (LYGTGAMDFGVGGFIFGAAMV) form a helical membrane-spanning segment. The Cytoplasmic segment spans residues 182–201 (CPEVRRKSIEESRFNYLRKS). The chain crosses the membrane as a helical span at residues 202 to 222 (LYSVWPLVFLGMGRLVIIKSI). Over 223 to 236 (GYQEHSTEYGIHWN) the chain is Lumenal. Residues 237–257 (FFFTIIVVRLVTSLLLIIFPL) traverse the membrane as a helical segment. Over 258-259 (NK) the chain is Cytoplasmic. Residues 260–280 (SWIVAVSITVVYQLALDYTPL) traverse the membrane as a helical segment. The Lumenal portion of the chain corresponds to 281–304 (KRILLYGTDGSGTRVGFLNANREG). A helical transmembrane segment spans residues 305–325 (IISTLGYVTIHMAGVQTGLYV). Residues 326–339 (LKGRAQVRDWIKAT) lie on the Cytoplasmic side of the membrane. A helical membrane pass occupies residues 340–360 (CWVFSVAVGFFISLHIVQVNI). At 361–380 (EAVSRRMANLAFCLWVVASS) the chain is on the lumenal side. The helical transmembrane segment at 381-401 (LMLLSCLLLSGIILSFAQFLI) threads the bilayer. The Cytoplasmic segment spans residues 402–447 (KGSLVPCSWKLIQSPTTHKNHSESLILEAEKNQPSLCLITALNRNQ). At S415 the chain carries Phosphoserine. A helical membrane pass occupies residues 448-468 (LFFFLLSNITTGLINLTMDTL). Residues 469-472 (HTGA) are Lumenal-facing. The chain crosses the membrane as a helical span at residues 473–493 (LWTLVVLSIYMFTNCLVIYVL). Residues 494–503 (DLQGKTIKFW) lie on the Cytoplasmic side of the membrane.

Belongs to the PIGW family.

Its subcellular location is the endoplasmic reticulum membrane. It participates in glycolipid biosynthesis; glycosylphosphatidylinositol-anchor biosynthesis. Its function is as follows. Acyltransferase that catalyzes the acyl transfer from an acyl-CoA at the 2-OH position of the inositol ring of glucosaminyl phosphatidylinositol (GlcN-PI) to generate GlcN-(acyl)PI and participates in the fourth step of GPI-anchor biosynthesi. Required for the transport of GPI-anchored proteins to the plasma membrane. Acetylation during GPI-anchor biosynthesis is not essential for the subsequent mannosylation and is usually removed soon after the attachment of GPIs to proteins. The protein is Glucosaminyl-phosphatidylinositol-acyltransferase PIGW of Mus musculus (Mouse).